Here is a 277-residue protein sequence, read N- to C-terminus: Undecaprenyl-diphosphatase (277 aa).

The next 6 membrane-spanning stretches (helical) occupy residues 88-108 (MGWLVILGSLPIIVLGLLFQD), 117-137 (MWIVATMLIVFGMILAVADAV), 157-179 (FAQAMALIPGVSRSGGTITAGLL), 191-211 (SFLLAIPAVFGSGLYQLYKTV), 227-247 (LATVIAFVVGYVIIGWFLKFV), and 255-275 (FVWYRILLGLALYVLLGFNVI).

The protein belongs to the UppP family.

The protein localises to the cell membrane. The enzyme catalyses di-trans,octa-cis-undecaprenyl diphosphate + H2O = di-trans,octa-cis-undecaprenyl phosphate + phosphate + H(+). Its function is as follows. Catalyzes the dephosphorylation of undecaprenyl diphosphate (UPP). Confers resistance to bacitracin. In Paenarthrobacter aurescens (strain TC1), this protein is Undecaprenyl-diphosphatase.